The chain runs to 692 residues: Elongation factor G (692 aa).

Positions 8 to 282 (ENTRNIGIMA…AVIDYLPSPL (275 aa)) constitute a tr-type G domain. GTP is bound by residues 17–24 (AHIDAGKT), 81–85 (DTPGH), and 135–138 (NKMD).

The protein belongs to the TRAFAC class translation factor GTPase superfamily. Classic translation factor GTPase family. EF-G/EF-2 subfamily.

Its subcellular location is the cytoplasm. In terms of biological role, catalyzes the GTP-dependent ribosomal translocation step during translation elongation. During this step, the ribosome changes from the pre-translocational (PRE) to the post-translocational (POST) state as the newly formed A-site-bound peptidyl-tRNA and P-site-bound deacylated tRNA move to the P and E sites, respectively. Catalyzes the coordinated movement of the two tRNA molecules, the mRNA and conformational changes in the ribosome. The protein is Elongation factor G of Bacillus thuringiensis subsp. konkukian (strain 97-27).